The following is a 421-amino-acid chain: Aspartokinase (421 aa).

7 to 10 serves as a coordination point for ATP; that stretch reads KYGG. Residue 25-30 coordinates substrate; the sequence is RIVATK. Ser41 contributes to the ATP binding site. Substrate-binding positions include 45 to 49, Glu74, 125 to 126, 151 to 154, and Ser154; these read DTTDD, LE, and RGGS. Residues 174–175, 180–185, and Lys210 contribute to the ATP site; these read TD and FSADPR. 2 consecutive ACT domains span residues 267-348 and 349-421; these read VTIV…GKVS and LIGA…GTGR. Substrate contacts are provided by residues Asp274, 274-279, 292-294, Gln298, 360-361, 374-375, and 381-382; these read DIPGYA, NID, VT, NI, and SE.

It belongs to the aspartokinase family. In terms of assembly, heterotetramer consisting of 2 isoforms Alpha (catalytic and regulation) and of a homodimer of 2 isoforms Beta (regulation).

It catalyses the reaction L-aspartate + ATP = 4-phospho-L-aspartate + ADP. The protein operates within amino-acid biosynthesis; L-lysine biosynthesis via DAP pathway; (S)-tetrahydrodipicolinate from L-aspartate: step 1/4. Its pathway is amino-acid biosynthesis; L-methionine biosynthesis via de novo pathway; L-homoserine from L-aspartate: step 1/3. It functions in the pathway amino-acid biosynthesis; L-threonine biosynthesis; L-threonine from L-aspartate: step 1/5. Feedback inhibition by lysine and threonine. In terms of biological role, catalyzes the phosphorylation of the beta-carboxyl group of aspartic acid with ATP to yield 4-phospho-L-aspartate, which is involved in the branched biosynthetic pathway leading to the biosynthesis of amino acids lysine, threonine, isoleucine and methionine. The chain is Aspartokinase (ask) from Mycobacterium bovis (strain ATCC BAA-935 / AF2122/97).